The chain runs to 45 residues: Monellin chain A (45 aa).

As to quaternary structure, heterodimer of an A chain and a B chain.

Functionally, taste-modifying protein; intensely sweet-tasting protein. This chain is Monellin chain A, found in Dioscoreophyllum cumminsii (Serendipity berry).